Here is a 98-residue protein sequence, read N- to C-terminus: MGMWCTTLFMVSCVSICLILSHVQEVEAGAPPQDCWNLVTFPAKCGIHGKKKCFKEMESKYQQRFLQCTCKNLKPEPKSPKDEHDCTCQRANPYECNS.

The N-terminal stretch at 1–28 (MGMWCTTLFMVSCVSICLILSHVQEVEA) is a signal peptide. Intrachain disulfides connect Cys-35/Cys-96, Cys-45/Cys-70, Cys-53/Cys-86, and Cys-68/Cys-88.

This sequence belongs to the DEFL family. As to expression, expressed at least in stem, root, rosette leaves and flower buds.

The protein localises to the secreted. This is Putative defensin-like protein 233 (SCRL22) from Arabidopsis thaliana (Mouse-ear cress).